The primary structure comprises 338 residues: Ketol-acid reductoisomerase (NADP(+)) (338 aa).

Positions I3–T183 constitute a KARI N-terminal Rossmann domain. NADP(+) contacts are provided by residues Y26–Q29, R49, S52, S54, and D84–Q87. The active site involves H109. G135 is a binding site for NADP(+). Residues T184–V329 enclose the KARI C-terminal knotted domain. Mg(2+) contacts are provided by D192, E196, E228, and E232. Residue S253 coordinates substrate.

Belongs to the ketol-acid reductoisomerase family. Mg(2+) serves as cofactor.

It catalyses the reaction (2R)-2,3-dihydroxy-3-methylbutanoate + NADP(+) = (2S)-2-acetolactate + NADPH + H(+). The enzyme catalyses (2R,3R)-2,3-dihydroxy-3-methylpentanoate + NADP(+) = (S)-2-ethyl-2-hydroxy-3-oxobutanoate + NADPH + H(+). Its pathway is amino-acid biosynthesis; L-isoleucine biosynthesis; L-isoleucine from 2-oxobutanoate: step 2/4. It functions in the pathway amino-acid biosynthesis; L-valine biosynthesis; L-valine from pyruvate: step 2/4. Its function is as follows. Involved in the biosynthesis of branched-chain amino acids (BCAA). Catalyzes an alkyl-migration followed by a ketol-acid reduction of (S)-2-acetolactate (S2AL) to yield (R)-2,3-dihydroxy-isovalerate. In the isomerase reaction, S2AL is rearranged via a Mg-dependent methyl migration to produce 3-hydroxy-3-methyl-2-ketobutyrate (HMKB). In the reductase reaction, this 2-ketoacid undergoes a metal-dependent reduction by NADPH to yield (R)-2,3-dihydroxy-isovalerate. The protein is Ketol-acid reductoisomerase (NADP(+)) of Corynebacterium jeikeium (strain K411).